The chain runs to 254 residues: Protein CbbY, plasmid (254 aa).

This sequence belongs to the HAD-like hydrolase superfamily. CbbY/CbbZ/Gph/YieH family.

This chain is Protein CbbY, plasmid (cbbYP), found in Cupriavidus necator (strain ATCC 17699 / DSM 428 / KCTC 22496 / NCIMB 10442 / H16 / Stanier 337) (Ralstonia eutropha).